Here is a 284-residue protein sequence, read N- to C-terminus: Tropomyosin, smooth muscle/fibroblast CTM1 (284 aa).

Positions 1 to 284 (MEAIKKKMTM…DVTLQGIGDL (284 aa)) form a coiled coil. Positions 18–38 (AIDRAEQAETDKKSAEDKATG) are disordered.

Belongs to the tropomyosin family. In terms of assembly, homodimer. Predominantly expressed in body wall muscle and heart, low in intestine, ovary and larval tail muscle.

Its function is as follows. The function of tropomyosin in smooth muscle and non-muscle cells is not clear. This chain is Tropomyosin, smooth muscle/fibroblast CTM1 (CTM1), found in Ciona intestinalis (Transparent sea squirt).